The following is a 335-amino-acid chain: Cathepsin B-like cysteine proteinase 4 (335 aa).

An N-terminal signal peptide occupies residues M1–G15. The propeptide occupies L16–T80. 6 cysteine pairs are disulfide-bonded: C94–C123, C106–C150, C142–C209, C143–C146, C179–C213, and C187–C199. Residue C109 is part of the active site. The N-linked (GlcNAc...) asparagine glycan is linked to N193. Active-site residues include H281 and N301.

This sequence belongs to the peptidase C1 family.

It is found in the secreted. Functionally, thiol protease which shows activity against the fluorogenic substrate z-Arg-Arg-AMC. This chain is Cathepsin B-like cysteine proteinase 4 (cpr-4), found in Caenorhabditis elegans.